A 457-amino-acid polypeptide reads, in one-letter code: 3-isopropylmalate dehydratase large subunit (457 aa).

Residues Cys337, Cys397, and Cys400 each contribute to the [4Fe-4S] cluster site.

This sequence belongs to the aconitase/IPM isomerase family. LeuC type 1 subfamily. Heterodimer of LeuC and LeuD. [4Fe-4S] cluster is required as a cofactor.

It carries out the reaction (2R,3S)-3-isopropylmalate = (2S)-2-isopropylmalate. The protein operates within amino-acid biosynthesis; L-leucine biosynthesis; L-leucine from 3-methyl-2-oxobutanoate: step 2/4. Functionally, catalyzes the isomerization between 2-isopropylmalate and 3-isopropylmalate, via the formation of 2-isopropylmaleate. This chain is 3-isopropylmalate dehydratase large subunit, found in Oenococcus oeni (strain ATCC BAA-331 / PSU-1).